Consider the following 860-residue polypeptide: Leucine--tRNA ligase (860 aa).

Positions 42 to 52 (PYPSGRLHMGH) match the 'HIGH' region motif. Residues 619-623 (KMSKS) carry the 'KMSKS' region motif. Lys622 serves as a coordination point for ATP.

This sequence belongs to the class-I aminoacyl-tRNA synthetase family.

It localises to the cytoplasm. The catalysed reaction is tRNA(Leu) + L-leucine + ATP = L-leucyl-tRNA(Leu) + AMP + diphosphate. The chain is Leucine--tRNA ligase from Escherichia coli (strain ATCC 8739 / DSM 1576 / NBRC 3972 / NCIMB 8545 / WDCM 00012 / Crooks).